Consider the following 333-residue polypeptide: Casein kinase II subunit alpha-2 (333 aa).

The Protein kinase domain maps to 34 to 319 (YEVVRKVGRG…AREAMAHPYF (286 aa)). Residues 40-48 (VGRGKYSEV) and Lys63 each bind ATP. Asp151 serves as the catalytic Proton acceptor.

This sequence belongs to the protein kinase superfamily. Ser/Thr protein kinase family. CK2 subfamily. In terms of assembly, monomer. Autophosphorylated.

It is found in the cytoplasm. The enzyme catalyses L-seryl-[protein] + ATP = O-phospho-L-seryl-[protein] + ADP + H(+). The catalysed reaction is L-threonyl-[protein] + ATP = O-phospho-L-threonyl-[protein] + ADP + H(+). Casein kinases are operationally defined by their preferential utilization of acidic proteins such as caseins as substrates. It can phosphorylate a large number of proteins. Involved in photoperiod sensitivity (PS). Increases days-to-heading under natural day (ND) and long day (LD) conditions, but not under short day (SD) conditions. The polypeptide is Casein kinase II subunit alpha-2 (Oryza sativa subsp. indica (Rice)).